A 462-amino-acid chain; its full sequence is Cleavage and polyadenylation specificity factor subunit 7 (462 aa).

Disordered stretches follow at residues 34–68 (VLTA…NKTP) and 161–213 (TRQN…PSVL). Positions 50–62 (EPPPPVRQEPAPK) are enriched in pro residues. In terms of domain architecture, RRM spans 82 to 162 (AAVYVGSFSW…EKVDVRPATR (81 aa)). Over residues 181–190 (HSRDSSDSAD) the composition is skewed to basic and acidic residues. Threonine 194 is modified (phosphothreonine). Serine 196 bears the Phosphoserine mark. A Glycyl lysine isopeptide (Lys-Gly) (interchain with G-Cter in SUMO2) cross-link involves residue lysine 345. Positions 400-462 (SVGASGSSSR…HRDRERDRHH (63 aa)) are disordered. A phosphoserine mark is found at serine 404 and serine 414. The segment at 409–460 (RKRHRSRERSPSRSRESSRRHRDLLHNEDRHDDYFQERNREHERHRDRERDR) is arg/Ser-rich domain. 2 stretches are compositionally biased toward basic and acidic residues: residues 416–425 (ERSPSRSRES) and 432–462 (LLHN…DRHH).

It belongs to the RRM CPSF6/7 family. In terms of assembly, component of the cleavage factor Im (CFIm) complex which is a heterotetramer composed of two subunits of NUDT21/CPSF5 and two subunits of CPSF6 or CPSF7 or a heterodimer of CPSF6 and CPSF7. The cleavage factor Im (CFIm) complex associates with the CPSF and CSTF complexes to promote the assembly of the core mRNA 3'-processing machinery. Interacts with NUDT21/CPSF5. Interacts (via Arg/Ser-rich domain) with FIP1L1 (preferentially via unphosphorylated form and Arg/Glu/Asp-rich region); this interaction mediates, at least in part, the interaction between the CFIm and CPSF complexes and may be inhibited by CPSF7 hyper-phosphorylation. Post-translationally, phosphorylated. In terms of processing, asymmetrically dimethylated on arginine residues by PRMT1.

It localises to the nucleus. The protein localises to the cytoplasm. Functionally, component of the cleavage factor Im (CFIm) complex that functions as an activator of the pre-mRNA 3'-end cleavage and polyadenylation processing required for the maturation of pre-mRNA into functional mRNAs. CFIm contributes to the recruitment of multiprotein complexes on specific sequences on the pre-mRNA 3'-end, so called cleavage and polyadenylation signals (pA signals). Most pre-mRNAs contain multiple pA signals, resulting in alternative cleavage and polyadenylation (APA) producing mRNAs with variable 3'-end formation. The CFIm complex acts as a key regulator of cleavage and polyadenylation site choice during APA through its binding to 5'-UGUA-3' elements localized in the 3'-untranslated region (UTR) for a huge number of pre-mRNAs. CPSF7 activates directly the mRNA 3'-processing machinery. Binds to pA signals in RNA substrates. The polypeptide is Cleavage and polyadenylation specificity factor subunit 7 (Rattus norvegicus (Rat)).